The sequence spans 293 residues: Fructose-bisphosphate aldolase class 1 (293 aa).

The active-site Proton acceptor is E176. K211 serves as the catalytic Schiff-base intermediate with dihydroxyacetone-P.

This sequence belongs to the class I fructose-bisphosphate aldolase family.

The catalysed reaction is beta-D-fructose 1,6-bisphosphate = D-glyceraldehyde 3-phosphate + dihydroxyacetone phosphate. It participates in carbohydrate degradation; glycolysis; D-glyceraldehyde 3-phosphate and glycerone phosphate from D-glucose: step 4/4. The protein is Fructose-bisphosphate aldolase class 1 of Porphyromonas gingivalis (strain ATCC 33277 / DSM 20709 / CIP 103683 / JCM 12257 / NCTC 11834 / 2561).